Here is a 519-residue protein sequence, read N- to C-terminus: Sugar transport protein MST5 (519 aa).

Topologically, residues 1 to 18 (MAGGAMVQTVGGKTYPGK) are cytoplasmic. A helical transmembrane segment spans residues 19-39 (MTAFVFFTCLVASSGGLIFGY). Topologically, residues 40-80 (DIGISGGVTSMDSFLSEFFPSVYAQAKASKDTNQYCKFDSQ) are extracellular. The chain crosses the membrane as a helical span at residues 81 to 101 (LLTLFTSSLYLAALATSFVAA). The Cytoplasmic segment spans residues 102 to 110 (WVTRVFGRK). The helical transmembrane segment at 111–127 (WSMFCGGVTFLAGSALN) threads the bilayer. Gly128 is a topological domain (extracellular). A helical transmembrane segment spans residues 129 to 149 (AATDVMMLILGRILLGIGVGF). Residues 150–167 (ANQSVPLYLSEMAPANLR) lie on the Cytoplasmic side of the membrane. Residues 168–188 (GMLNIGFQLMTTIGILSANLI) traverse the membrane as a helical segment. Residues 189 to 202 (NYATSSIEGGWGWR) are Extracellular-facing. The chain crosses the membrane as a helical span at residues 203–223 (IGLGLAGVPALIITLGALVLP). Topologically, residues 224 to 295 (DTPNSLIARG…IAILIPCFQQ (72 aa)) are cytoplasmic. A helical membrane pass occupies residues 296-316 (LTGINVIMFYAPVLFLTIGFA). At 317 to 321 (GDASL) the chain is on the extracellular side. A helical transmembrane segment spans residues 322 to 342 (MSAVITGLVNMFATVVSIISV). At 343 to 357 (DRLGRRVLFLQGGTQ) the chain is on the cytoplasmic side. Residues 358-378 (MFISQVVVGTLIALQFGVAGV) form a helical membrane-spanning segment. At 379–386 (GEMSRSYA) the chain is on the extracellular side. Residues 387-407 (ILLVLFICMYVAGFAWSWGPL) form a helical membrane-spanning segment. Topologically, residues 408-426 (GWLVPSEVFALEIRSAGQS) are cytoplasmic. A helical transmembrane segment spans residues 427–447 (IAVCVNMMLTFVIGQAFLTML). The Extracellular segment spans residues 448-451 (CHLK). Residues 452–472 (FGLFYFFAGWMLVMTTFVALF) form a helical membrane-spanning segment. Topologically, residues 473–519 (LPETKGVPIEEMNHVWSRHWFWGSYVTAHDVAGAGAGGGGNRRSHNV) are cytoplasmic.

It belongs to the major facilitator superfamily. Sugar transporter (TC 2.A.1.1) family. As to expression, expressed in panicles before heading. Expressed in flowers before pollination.

Its subcellular location is the membrane. In terms of biological role, mediates active uptake of hexoses by sugar:proton symport. Can transport glucose, xylose and 3-O-methylglucose. May play a role at the early stage of seed development. The sequence is that of Sugar transport protein MST5 from Oryza sativa subsp. japonica (Rice).